Consider the following 104-residue polypeptide: L-rhamnose mutarotase (104 aa).

Tyrosine 18 contacts substrate. Histidine 22 serves as the catalytic Proton donor. Substrate is bound by residues tyrosine 41 and tryptophan 76–tryptophan 77.

This sequence belongs to the rhamnose mutarotase family. Homodimer.

The protein localises to the cytoplasm. It catalyses the reaction alpha-L-rhamnose = beta-L-rhamnose. Its pathway is carbohydrate metabolism; L-rhamnose metabolism. Involved in the anomeric conversion of L-rhamnose. In Clostridium beijerinckii (strain ATCC 51743 / NCIMB 8052) (Clostridium acetobutylicum), this protein is L-rhamnose mutarotase.